The sequence spans 95 residues: Bacterial microcompartment shell protein EutM (95 aa).

In terms of domain architecture, BMC spans 6–90; the sequence is ALGMIETKGL…PHFEVDAILP (85 aa).

It belongs to the bacterial microcompartments protein family. As to quaternary structure, homohexamer; has a positively charged pore 9 Angstroms in diameter. The hexamers pack into a two-dimensional array. May interact with EutQ.

Its subcellular location is the bacterial microcompartment. It functions in the pathway amine and polyamine degradation; ethanolamine degradation. A component of the bacterial microcompartment (BMC) shell dedicated to ethanolamine degradation. Each homohexamer has a central pore with an opening of up to 9.0 Angstroms. Expression of the eut operon may allow this bacteria to use ethanolamine as a carbon, nitrogen and energy source. The pore probably allows metabolite passage into and out of the BMC. This chain is Bacterial microcompartment shell protein EutM, found in Clostridioides difficile (strain 630) (Peptoclostridium difficile).